We begin with the raw amino-acid sequence, 382 residues long: Apolipoprotein A-IV (382 aa).

The N-terminal stretch at 1-20 is a signal peptide; sequence MFLRAVVLTLALVAVTGARA. 13 tandem repeats follow at residues 33 to 54, 60 to 81, 82 to 103, 115 to 136, 137 to 158, 159 to 180, 181 to 202, 203 to 224, 225 to 246, 247 to 268, 269 to 286, 287 to 308, and 309 to 330. The segment at 33 to 330 is 13 X 22 AA approximate tandem repeats; the sequence is DYFSQLSNNA…QVEELRQKLG (298 aa). The tract at residues 362-382 is disordered; that stretch reads ENQDMPLALPEQEQAPGPLES.

The protein belongs to the apolipoprotein A1/A4/E family. As to quaternary structure, homodimer.

Its subcellular location is the secreted. Functionally, may have a role in chylomicrons and VLDL secretion and catabolism. Required for efficient activation of lipoprotein lipase by ApoC-II; potent activator of LCAT. Apoa-IV is a major component of HDL and chylomicrons. The chain is Apolipoprotein A-IV (APOA4) from Acinonyx jubatus (Cheetah).